An 899-amino-acid polypeptide reads, in one-letter code: Tubulin glycylase 3F (899 aa).

Residues 471–835 (FKDVIQIIKN…TEYYQIQNWK (365 aa)) enclose the TTL domain. Residues 642–645 (QKYI), Lys-663, and Asp-665 each bind ATP.

Its subcellular location is the cytoplasm. It is found in the cytoskeleton. It localises to the cilium basal body. Probable glycylase which modifies tubulin, generating side chains of glycine on the gamma-carboxyl groups of specific glutamate residues within the C-terminal tail of tubulin. The polypeptide is Tubulin glycylase 3F (TTLL3F) (Tetrahymena thermophila (strain SB210)).